A 635-amino-acid polypeptide reads, in one-letter code: Factor of DNA methylation 2 (635 aa).

Positions Leu289–Lys471 form a coiled coil. Residues Glu350–Ala365 are compositionally biased toward basic and acidic residues. Residues Glu350–Glu376 form a disordered region.

In terms of assembly, forms a complex with IDN2 and FMD1/INDL1. Highly expressed in flowers and at lower levels in roots, leaves and stems.

In terms of biological role, forms a complex with IDN2 and FDM1/IDNL1 that is required for RNA-directed DNA methylation (RdDM) and that functions at a downstream step of the RdDM pathway. This is Factor of DNA methylation 2 from Arabidopsis thaliana (Mouse-ear cress).